The primary structure comprises 413 residues: Tyrosine--tRNA ligase (413 aa).

Residue tyrosine 34 participates in L-tyrosine binding. Positions 39–48 (PTSHSLTVGH) match the 'HIGH' region motif. L-tyrosine is bound by residues tyrosine 164 and glutamine 168. The 'KMSKS' region signature appears at 225-229 (KFGKS). Lysine 228 provides a ligand contact to ATP. The region spanning 347 to 413 (ILLVDALVQT…GKKNNALIVF (67 aa)) is the S4 RNA-binding domain.

Belongs to the class-I aminoacyl-tRNA synthetase family. TyrS type 1 subfamily. Homodimer.

The protein resides in the cytoplasm. It carries out the reaction tRNA(Tyr) + L-tyrosine + ATP = L-tyrosyl-tRNA(Tyr) + AMP + diphosphate + H(+). In terms of biological role, catalyzes the attachment of tyrosine to tRNA(Tyr) in a two-step reaction: tyrosine is first activated by ATP to form Tyr-AMP and then transferred to the acceptor end of tRNA(Tyr). The protein is Tyrosine--tRNA ligase of Onion yellows phytoplasma (strain OY-M).